The chain runs to 176 residues: Nucleoside triphosphate/diphosphate phosphatase (176 aa).

R23 serves as the catalytic Proton donor. Positions 87, 103, 105, 107, 120, and 123 each coordinate Mg(2+).

This sequence belongs to the Ntdp family. Mg(2+) serves as cofactor.

The catalysed reaction is a ribonucleoside 5'-triphosphate + H2O = a ribonucleoside 5'-diphosphate + phosphate + H(+). It catalyses the reaction a ribonucleoside 5'-diphosphate + H2O = a ribonucleoside 5'-phosphate + phosphate + H(+). Has nucleoside phosphatase activity towards nucleoside triphosphates and nucleoside diphosphates. This Bacillus subtilis (strain 168) protein is Nucleoside triphosphate/diphosphate phosphatase (ygaC).